The sequence spans 583 residues: Ankyrin repeat-containing protein NPR4 (583 aa).

7 ANK repeats span residues 68–97 (HNDT…AAVA), 119–148 (AGET…AEGV), 154–183 (SGYD…LLAK), 188–218 (ANTS…GLVE), 223–252 (NGKN…QLAR), 257–286 (KGQT…AIVM), and 291–321 (NGNT…HVNA). A run of 4 helical transmembrane segments spans residues 414–434 (VTVV…TVPG), 452–472 (IFFI…VVQI), 492–512 (LMWL…YIVL), and 518–538 (WAAL…LGTM).

It localises to the cell membrane. Its function is as follows. Involved in salt stress tolerance. This chain is Ankyrin repeat-containing protein NPR4, found in Oryza sativa subsp. japonica (Rice).